A 354-amino-acid chain; its full sequence is Uroporphyrinogen decarboxylase (354 aa).

Residues 27–31, Asp-77, Tyr-153, Thr-208, and His-326 contribute to the substrate site; that span reads RQAGR.

Belongs to the uroporphyrinogen decarboxylase family. Homodimer.

The protein resides in the cytoplasm. It catalyses the reaction uroporphyrinogen III + 4 H(+) = coproporphyrinogen III + 4 CO2. It functions in the pathway porphyrin-containing compound metabolism; protoporphyrin-IX biosynthesis; coproporphyrinogen-III from 5-aminolevulinate: step 4/4. Its function is as follows. Catalyzes the decarboxylation of four acetate groups of uroporphyrinogen-III to yield coproporphyrinogen-III. The chain is Uroporphyrinogen decarboxylase from Neisseria meningitidis serogroup C (strain 053442).